Consider the following 209-residue polypeptide: MNLFQNAKFFTTVNHLKDLPDTPLEIAFVGRSNAGKSSAINTLTNHVRLAYVSKTPGRTQHINFFELQNGNFMVDLPGYGYAQVPEAVRAHWVNLLGDYLQQRKQLIGLVLIMDARHPLKELDIRMLDFFHTTGRPVHILLSKADKLSKNEQIKTLSQVKKLLKPYSDRQNISVQLFSSLKKQGIDEANRTVGSWFDAADAAASSPKEN.

The EngB-type G domain occupies 22–198 (TPLEIAFVGR…NRTVGSWFDA (177 aa)). Positions 37 and 59 each coordinate Mg(2+).

This sequence belongs to the TRAFAC class TrmE-Era-EngA-EngB-Septin-like GTPase superfamily. EngB GTPase family. Mg(2+) serves as cofactor.

Necessary for normal cell division and for the maintenance of normal septation. This chain is Probable GTP-binding protein EngB, found in Neisseria meningitidis serogroup C (strain 053442).